The primary structure comprises 474 residues: Cysteine--tRNA ligase (474 aa).

C29 lines the Zn(2+) pocket. Residues 31–41 carry the 'HIGH' region motif; sequence ATVQGEPHVGH. Positions 211, 236, and 240 each coordinate Zn(2+). The 'KMSKS' region signature appears at 267–271; sequence KMSKS. Position 270 (K270) interacts with ATP.

The protein belongs to the class-I aminoacyl-tRNA synthetase family. As to quaternary structure, monomer. It depends on Zn(2+) as a cofactor.

Its subcellular location is the cytoplasm. It catalyses the reaction tRNA(Cys) + L-cysteine + ATP = L-cysteinyl-tRNA(Cys) + AMP + diphosphate. This is Cysteine--tRNA ligase from Beutenbergia cavernae (strain ATCC BAA-8 / DSM 12333 / CCUG 43141 / JCM 11478 / NBRC 16432 / NCIMB 13614 / HKI 0122).